A 340-amino-acid polypeptide reads, in one-letter code: Ferrochelatase (340 aa).

Histidine 202 and glutamate 283 together coordinate Fe cation.

This sequence belongs to the ferrochelatase family.

It is found in the cytoplasm. It carries out the reaction heme b + 2 H(+) = protoporphyrin IX + Fe(2+). Its pathway is porphyrin-containing compound metabolism; protoheme biosynthesis; protoheme from protoporphyrin-IX: step 1/1. Its function is as follows. Catalyzes the ferrous insertion into protoporphyrin IX. The protein is Ferrochelatase of Acinetobacter baylyi (strain ATCC 33305 / BD413 / ADP1).